A 423-amino-acid chain; its full sequence is Glucuronoxylanase XynC (423 aa).

Positions 1–33 are cleaved as a signal peptide; sequence MMSSVKKTICVLLVCFTMMSVMLLGPGVTEVSA. Residue Glu-172 is the Proton donor of the active site. Glu-261 acts as the Nucleophile in catalysis.

Belongs to the glycosyl hydrolase 30 family.

The protein localises to the secreted. The catalysed reaction is Endohydrolysis of (1-&gt;4)-beta-D-xylosyl links in some glucuronoarabinoxylans.. Its pathway is glycan degradation; xylan degradation. Catalyzes the depolymerization of methylglucuronoxylan (MeGAXn). It cleaves the beta-1,4-xylosidic bond penultimate to that linking carbon one of the xylose residue substituted with alpha-1,2-linked 4-O-methyl-D-glucuronate (MeGA). The chain is Glucuronoxylanase XynC (xynC) from Bacillus subtilis.